A 406-amino-acid chain; its full sequence is Peptidase T (406 aa).

Histidine 82 contacts Zn(2+). The active site involves aspartate 84. Aspartate 142 is a binding site for Zn(2+). The Proton acceptor role is filled by glutamate 176. Residues glutamate 177, aspartate 199, and histidine 381 each contribute to the Zn(2+) site.

The protein belongs to the peptidase M20B family. The cofactor is Zn(2+).

It localises to the cytoplasm. It carries out the reaction Release of the N-terminal residue from a tripeptide.. Cleaves the N-terminal amino acid of tripeptides. This is Peptidase T from Streptococcus agalactiae serotype Ia (strain ATCC 27591 / A909 / CDC SS700).